A 92-amino-acid chain; its full sequence is Small integral membrane protein 12 (92 aa).

The chain crosses the membrane as a helical span at residues 15–34 (YVTFPVAFVVGAVGYHLEWF).

The protein belongs to the SMIM12 family.

Its subcellular location is the membrane. This chain is Small integral membrane protein 12 (SMIM12), found in Canis lupus familiaris (Dog).